Here is a 918-residue protein sequence, read N- to C-terminus: Interleukin-6 receptor subunit beta (918 aa).

Positions 1-22 are cleaved as a signal peptide; that stretch reads MLTLQTWLVQALFIFLTTESTG. The Extracellular segment spans residues 23–619; the sequence is ELLDPCGYIS…TPKFAQGEIE (597 aa). Residues 26-120 enclose the Ig-like C2-type domain; it reads DPCGYISPES…LEQNVYGITI (95 aa). Cystine bridges form between Cys-28–Cys-54 and Cys-48–Cys-103. Asn-43, Asn-83, and Asn-131 each carry an N-linked (GlcNAc...) asparagine glycan. Fibronectin type-III domains follow at residues 125-216, 224-324, 329-424, 426-517, and 518-613; these read PPEK…NFDP, PPHN…TYED, APSF…FQAT, PVMD…LKQA, and PPSK…TPKF. The cysteines at positions 134 and 144 are disulfide-linked. Asn-157 carries N-linked (GlcNAc...) asparagine glycosylation. A disulfide bridge links Cys-172 with Cys-182. N-linked (GlcNAc...) asparagine glycosylation occurs at Asn-227. A WSXWS motif motif is present at residues 310-314; that stretch reads WSDWS. N-linked (GlcNAc...) asparagine glycans are attached at residues Asn-379 and Asn-383. The N-linked (GlcNAc...) (complex) asparagine glycan is linked to Asn-390. The cysteines at positions 458 and 466 are disulfide-linked. Residues Asn-553 and Asn-564 are each glycosylated (N-linked (GlcNAc...) asparagine). The chain crosses the membrane as a helical span at residues 620 to 641; sequence AIVVPVCLAFLLTTLLGVLFCF. The Cytoplasmic portion of the chain corresponds to 642-918; the sequence is NKRDLIKKHI…TVRQGGYMPQ (277 aa). Residues 651–659 carry the Box 1 motif motif; sequence IWPNVPDPS. Disordered regions lie at residues 660–681 and 722–758; these read KSHI…SKDQ and EGHS…STVQ. 2 positions are modified to phosphoserine: Ser-661 and Ser-667. Positions 731–755 are enriched in low complexity; the sequence is SSCMSSSRPSISSSDENESSQNTSS. A phosphoserine mark is found at Ser-782, Ser-789, Ser-829, and Ser-839.

It belongs to the type I cytokine receptor family. Type 2 subfamily. Component of a hexamer of two molecules each of IL6, IL6R and IL6ST; associates with the complex IL6:IL6R but does not interact with IL6. Forms heterodimers composed of LIFR and IL6ST (type I OSM receptor) which are activated by LIF and OSM. Also forms heterodimers composed of OSMR and IL6ST (type II receptor) which are activated by OSM but not by LIF. Component of a receptor complex composed of IL6ST/GP130, IL27RA/WSX1 and CNTFR which interacts with the neuroprotective peptide humanin. Interacts with HCK. Interacts with INPP5D/SHIP1. Interacts with SRC and YES. Interacts with ARMH4; this interaction prevents IL6ST protein homodimerization and bridges ARMH4 with IL6R and STAT3 and therefore inhibits phosphorylation of STAT3 at 'Tyr-705'. In terms of assembly, (Microbial infection) The homodimer binds two molecules of herpes virus 8/HHV-8 protein vIL-6. Phosphorylation of Ser-782 down-regulates cell surface expression. Post-translationally, heavily N-glycosylated. Glycosylation is required for protein stability and localization in plasma membrane but not for ligand binding. As to expression, found in all the tissues and cell lines examined. Expression not restricted to IL6 responsive cells. In terms of tissue distribution, expressed in blood serum (at protein level).

It is found in the cell membrane. The protein resides in the secreted. Signal-transducing molecule. The receptor systems for IL6, LIF, OSM, CNTF, IL11, CTF1 and BSF3 can utilize IL6ST for initiating signal transmission. Binding of IL6 to IL6R induces IL6ST homodimerization and formation of a high-affinity receptor complex, which activates the intracellular JAK-MAPK and JAK-STAT3 signaling pathways. That causes phosphorylation of IL6ST tyrosine residues which in turn activates STAT3. In parallel, the IL6 signaling pathway induces the expression of two cytokine receptor signaling inhibitors, SOCS1 and SOCS3, which inhibit JAK and terminate the activity of the IL6 signaling pathway as a negative feedback loop. Also activates the yes-associated protein 1 (YAP) and NOTCH pathways to control inflammation-induced epithelial regeneration, independently of STAT3. Acts as a receptor for the neuroprotective peptide humanin as part of a complex with IL27RA/WSX1 and CNTFR. Mediates signals which regulate immune response, hematopoiesis, pain control and bone metabolism. Has a role in embryonic development. Essential for survival of motor and sensory neurons and for differentiation of astrocytes. Required for expression of TRPA1 in nociceptive neurons. Required for the maintenance of PTH1R expression in the osteoblast lineage and for the stimulation of PTH-induced osteoblast differentiation. Required for normal trabecular bone mass and cortical bone composition. Functionally, binds to the soluble IL6:sIL6R complex (hyper-IL6), thereby blocking IL6 trans-signaling. Inhibits sIL6R-dependent acute phase response. Also blocks IL11 cluster signaling through IL11R. This Homo sapiens (Human) protein is Interleukin-6 receptor subunit beta.